Consider the following 57-residue polypeptide: Large ribosomal subunit protein bL32 (57 aa).

It belongs to the bacterial ribosomal protein bL32 family.

In Staphylococcus haemolyticus (strain JCSC1435), this protein is Large ribosomal subunit protein bL32.